A 388-amino-acid polypeptide reads, in one-letter code: Leucine aminopeptidase 1 (388 aa).

A signal peptide spans 1–19; sequence MKSLSLLALAAIAPPAAVA. Residues 20-88 constitute a propeptide that is removed on maturation; the sequence is AVVDRQVPFE…SAKSHERIQV (69 aa). N-linked (GlcNAc...) asparagine glycosylation occurs at asparagine 180. Residues histidine 188, aspartate 207, glutamate 246, and aspartate 273 each contribute to the Zn(2+) site. An intrachain disulfide couples cysteine 322 to cysteine 326. A Zn(2+)-binding site is contributed by histidine 355.

This sequence belongs to the peptidase M28 family. M28E subfamily. In terms of assembly, monomer. Requires Zn(2+) as cofactor.

Its subcellular location is the secreted. Its function is as follows. Extracellular aminopeptidase that allows assimilation of proteinaceous substrates. The chain is Leucine aminopeptidase 1 (LAP1) from Coccidioides posadasii (strain C735) (Valley fever fungus).